The sequence spans 348 residues: Oxygen-dependent coproporphyrinogen-III oxidase (348 aa).

S104 contributes to the substrate binding site. A divalent metal cation is bound by residues H108 and H118. The Proton donor role is filled by H118. Position 120-122 (120-122 (NYR)) interacts with substrate. A divalent metal cation is bound by residues H152 and H182. Residues 272-307 (YAEFNLVWDRGTIFGLQTNGRTESILMSLPPLARWE) are important for dimerization.

Belongs to the aerobic coproporphyrinogen-III oxidase family. Homodimer. A divalent metal cation is required as a cofactor.

It localises to the cytoplasm. It carries out the reaction coproporphyrinogen III + O2 + 2 H(+) = protoporphyrinogen IX + 2 CO2 + 2 H2O. It participates in porphyrin-containing compound metabolism; protoporphyrin-IX biosynthesis; protoporphyrinogen-IX from coproporphyrinogen-III (O2 route): step 1/1. In terms of biological role, involved in the heme and chlorophyll biosynthesis. Catalyzes the aerobic oxidative decarboxylation of propionate groups of rings A and B of coproporphyrinogen-III to yield the vinyl groups in protoporphyrinogen-IX. The polypeptide is Oxygen-dependent coproporphyrinogen-III oxidase (Prochlorococcus marinus (strain NATL2A)).